A 248-amino-acid polypeptide reads, in one-letter code: Triosephosphate isomerase (248 aa).

9-11 (NWK) lines the substrate pocket. His-94 functions as the Electrophile in the catalytic mechanism. Glu-166 (proton acceptor) is an active-site residue. Residues Gly-172, Ser-212, and 233 to 234 (GG) contribute to the substrate site.

It belongs to the triosephosphate isomerase family. In terms of assembly, homodimer.

The protein resides in the cytoplasm. It catalyses the reaction D-glyceraldehyde 3-phosphate = dihydroxyacetone phosphate. It participates in carbohydrate biosynthesis; gluconeogenesis. The protein operates within carbohydrate degradation; glycolysis; D-glyceraldehyde 3-phosphate from glycerone phosphate: step 1/1. Its function is as follows. Involved in the gluconeogenesis. Catalyzes stereospecifically the conversion of dihydroxyacetone phosphate (DHAP) to D-glyceraldehyde-3-phosphate (G3P). The polypeptide is Triosephosphate isomerase (Caldanaerobacter subterraneus subsp. tengcongensis (strain DSM 15242 / JCM 11007 / NBRC 100824 / MB4) (Thermoanaerobacter tengcongensis)).